The primary structure comprises 216 residues: Pyrophosphatase PpaX (216 aa).

Residue Asp9 is the Nucleophile of the active site.

Belongs to the HAD-like hydrolase superfamily. PpaX family. The cofactor is Mg(2+).

It catalyses the reaction diphosphate + H2O = 2 phosphate + H(+). Hydrolyzes pyrophosphate formed during P-Ser-HPr dephosphorylation by HPrK/P. Might play a role in controlling the intracellular pyrophosphate pool. The polypeptide is Pyrophosphatase PpaX (Bacillus anthracis (strain A0248)).